Reading from the N-terminus, the 351-residue chain is MRTTIPVRLAERSYDVLVGPGVRAALPEVVRRLGARRAVVVSARPADWVPGTGVETLLLQARDGEPTKRLSTVEELCGEFARFGLTRSDVVVSCGGGTTTDVVGLAAALYHRGVAVVHLPTSLLAQVDASVGGKTAVNLPAGKNLVGAYWQPSAVLCDTDYLTTLPRREVLNGLGEIARCHFIGAPDLRGRSRPEQIAASVTLKAGIVAQDERDTGPRHLLNYGHTLGHALEIATGFALRHGEAVAIGTVFAGRLAGALGRLDQSGVDEHLAVVRHYGLPAALPADVDPAVLVRQMYRDKKAITGLAFVLAGPRGAELVSDVPAPVVTDVLDRMPRDSLENLVGTTEAAAP.

NAD(+) is bound by residues 65 to 68, 97 to 101, 121 to 122, Lys134, Lys143, and 161 to 164; these read EPTK, GTTTD, TS, and YLTT. Zn(2+) is bound by residues Glu176, His225, and His241.

The protein belongs to the sugar phosphate cyclases superfamily. aDHQS family. It depends on NAD(+) as a cofactor. Co(2+) is required as a cofactor. Requires Zn(2+) as cofactor.

May catalyze the conversion of 3,4-dideoxy-4-amino-D-arabino-heptulosonate 7-phosphate (aDAHP) to 5-deoxy-5-amino-3-dehydroquinate (aDHQ). Probably involved in the formation of 3-amino-5-hydroxybenzoic acid (AHBA), the precursor of rifamycin and related ansamycins. This is Putative aminodehydroquinate synthase from Amycolatopsis mediterranei (strain S699) (Nocardia mediterranei).